Reading from the N-terminus, the 261-residue chain is tRNA U34 carboxymethyltransferase (261 aa).

Carboxy-S-adenosyl-L-methionine is bound by residues K25, W39, K44, G63, V114–E115, Y135, and R250.

It belongs to the class I-like SAM-binding methyltransferase superfamily. CmoB family. As to quaternary structure, homotetramer.

The enzyme catalyses carboxy-S-adenosyl-L-methionine + 5-hydroxyuridine(34) in tRNA = 5-carboxymethoxyuridine(34) in tRNA + S-adenosyl-L-homocysteine + H(+). Catalyzes carboxymethyl transfer from carboxy-S-adenosyl-L-methionine (Cx-SAM) to 5-hydroxyuridine (ho5U) to form 5-carboxymethoxyuridine (cmo5U) at position 34 in tRNAs. The chain is tRNA U34 carboxymethyltransferase from Helicobacter pylori (strain P12).